A 470-amino-acid chain; its full sequence is FAD-dependent monooxygenase SAT7 (470 aa).

Residues 28–48 (GLSVAIVGGGIVGIALALGLV) form a helical membrane-spanning segment. Residues glutamate 58, alanine 71, and arginine 143 each contribute to the FAD site. Residues arginine 227 and tyrosine 260 contribute to the active site. Residues aspartate 351 and alanine 364 each contribute to the FAD site.

The protein belongs to the paxM FAD-dependent monooxygenase family. It depends on FAD as a cofactor.

It localises to the membrane. It functions in the pathway mycotoxin biosynthesis. Functionally, FAD-dependent monooxygenase; part of the satratoxin SC1 cluster involved in the biosynthesis of satratoxins, trichothecene mycotoxins that are associated with human food poisonings. Satratoxins are suggested to be made by products of multiple gene clusters (SC1, SC2 and SC3) that encode 21 proteins in all, including polyketide synthases, acetyltransferases, and other enzymes expected to modify the trichothecene skeleton. SC1 encodes 10 proteins, SAT1 to SAT10. The largest are SAT8, which encodes a putative polyketide synthase (PKS) with a conventional non-reducing architecture, and SAT10, a putative protein containing four ankyrin repeats and thus may be involved in protein scaffolding. The putative short-chain reductase SAT3 may assist the PKS in some capacity. SAT6 contains a secretory lipase domain and acts probably as a trichothecene esterase. SAT5 encodes a putative acetyltransferase, and so, with SAT6, may affect endogenous protection from toxicity. The probable transcription factor SAT9 may regulate the expression of the SC1 cluster. SC2 encodes proteins SAT11 to SAT16, the largest of which encodes the putative reducing PKS SAT13. SAT11 is a cytochrome P450 monooxygenase, while SAT14 and SAT16 are probable acetyltransferases. The SC2 cluster may be regulated by the transcription factor SAT15. SC3 is a small cluster that encodes 5 proteins, SAT17 to SAT21. SAT21 is a putative MFS-type transporter which may have a role in exporting secondary metabolites. The four other proteins putatively encoded in SC3 include the taurine hydroxylase-like protein SAT17, the O-methyltransferase SAT18, the acetyltransferase SAT19, and the Cys6-type zinc finger SAT20, the latter being probably involved in regulation of SC3 expression. The chain is FAD-dependent monooxygenase SAT7 from Stachybotrys chartarum (strain CBS 109288 / IBT 7711) (Toxic black mold).